Consider the following 338-residue polypeptide: tRNA N6-adenosine threonylcarbamoyltransferase (338 aa).

Histidine 114 and histidine 118 together coordinate Fe cation. Substrate-binding positions include 136 to 140, aspartate 169, glycine 182, aspartate 186, and asparagine 275; that span reads LVSGG. Position 301 (aspartate 301) interacts with Fe cation.

This sequence belongs to the KAE1 / TsaD family. It depends on Fe(2+) as a cofactor.

The protein resides in the cytoplasm. The catalysed reaction is L-threonylcarbamoyladenylate + adenosine(37) in tRNA = N(6)-L-threonylcarbamoyladenosine(37) in tRNA + AMP + H(+). Its function is as follows. Required for the formation of a threonylcarbamoyl group on adenosine at position 37 (t(6)A37) in tRNAs that read codons beginning with adenine. Is involved in the transfer of the threonylcarbamoyl moiety of threonylcarbamoyl-AMP (TC-AMP) to the N6 group of A37, together with TsaE and TsaB. TsaD likely plays a direct catalytic role in this reaction. The protein is tRNA N6-adenosine threonylcarbamoyltransferase of Streptococcus equi subsp. zooepidemicus (strain MGCS10565).